Here is a 320-residue protein sequence, read N- to C-terminus: Putative movement protein (320 aa).

Catalysis depends on residues His144, Asp171, and Ser199. Residues 251–320 (RRSRSISAKR…GKGNSDGSSP (70 aa)) are disordered. A compositionally biased stretch (basic and acidic residues) spans 278 to 289 (RIERFGKDEFGR).

It belongs to the tobamoviruses movement protein family.

Its function is as follows. May play a role in viral cell to cell movement by increasing the size exclusion limit of plasmodesmata and forming a complex with viral RNA to assist its movement. May also have a papain-like protease activity and cleave the genome polyprotein. The chain is Putative movement protein from Malus sylvestris (European crab apple).